A 405-amino-acid chain; its full sequence is CMP-sialic acid transporter 4 (405 aa).

At Met1–Asn43 the chain is on the cytoplasmic side. Residues Phe44–Ser64 form a helical membrane-spanning segment. The Lumenal portion of the chain corresponds to Lys65–Pro74. Residues Ile75–Ile95 form a helical membrane-spanning segment. Over Gln96–Ala121 the chain is Cytoplasmic. A helical transmembrane segment spans residues Leu122 to Leu142. A topological domain (lumenal) is located at residue Tyr143. Residues Phe144–Leu164 traverse the membrane as a helical segment. Residues Lys165–Lys171 lie on the Cytoplasmic side of the membrane. Residues Phe172–Leu192 traverse the membrane as a helical segment. Residues Ser193–Gly203 are Lumenal-facing. Residues Leu204–Ala224 form a helical membrane-spanning segment. Topologically, residues Ser225–Asn244 are cytoplasmic. The chain crosses the membrane as a helical span at residues Leu245 to Phe265. The Lumenal segment spans residues Gln266 to Thr281. A helical membrane pass occupies residues Met282–Ala302. Residues Asp303 to Ser322 lie on the Cytoplasmic side of the membrane. The helical transmembrane segment at Ala323–Ile343 threads the bilayer. At Ser344–Ile405 the chain is on the lumenal side. Residues Ala386–Ile405 form a disordered region. Over residues Asp389–Ile405 the composition is skewed to basic and acidic residues.

This sequence belongs to the nucleotide-sugar transporter family. CMP-Sialate:CMP antiporter (TC 2.A.7.12) subfamily.

It is found in the golgi apparatus membrane. Functionally, sugar transporter involved in the transport of CMP-sialic acid from the cytoplasm into the Golgi. May transport important nucleotide sugars such as CMP-Kdo (2-keto-3-deoxy-D-manno-octulosonic acid) in physiological conditions. This is CMP-sialic acid transporter 4 from Oryza sativa subsp. indica (Rice).